The chain runs to 127 residues: uncharacterized protein (127 aa).

A signal peptide spans 1–16 (MIKKIIFGIAILLSTS). Residue Cys17 is the site of N-palmitoyl cysteine attachment. Residue Cys17 is the site of S-diacylglycerol cysteine attachment. Residues 56–101 (EVREEIQKYRVAIVKINKKKRELYNRLSKEAQNFLAEQQKYKQKLS) are a coiled coil. Positions 107–118 (VENDQKNNTADS) are enriched in polar residues. The disordered stretch occupies residues 107-127 (VENDQKNNTADSNDNKSKDTK).

It localises to the cell membrane. This is an uncharacterized protein from Rickettsia conorii (strain ATCC VR-613 / Malish 7).